Reading from the N-terminus, the 342-residue chain is Cytochrome f (342 aa).

The first 28 residues, 1–28 (MKKQWIAGAFGLTAALAGLVSVPQSALA), serve as a signal peptide directing secretion. 3 residues coordinate heme: Cys48, Cys51, and His52. A helical membrane pass occupies residues 305–325 (VTWLVAFLAAAFICQLLLVLK).

The protein belongs to the cytochrome f family. The 4 large subunits of the cytochrome b6-f complex are cytochrome b6, subunit IV (17 kDa polypeptide, PetD), cytochrome f and the Rieske protein, while the 4 small subunits are PetG, PetL, PetM and PetN. The complex functions as a dimer. It depends on heme as a cofactor.

It is found in the cell inner membrane. In terms of biological role, component of the cytochrome b6-f complex, which mediates electron transfer between photosystem II (PSII) and photosystem I (PSI), cyclic electron flow around PSI, and state transitions. This Gloeobacter violaceus (strain ATCC 29082 / PCC 7421) protein is Cytochrome f (petA).